The following is an 82-amino-acid chain: Large ribosomal subunit protein bL31B (82 aa).

This sequence belongs to the bacterial ribosomal protein bL31 family. Type B subfamily. As to quaternary structure, part of the 50S ribosomal subunit.

This chain is Large ribosomal subunit protein bL31B, found in Pectobacterium atrosepticum (strain SCRI 1043 / ATCC BAA-672) (Erwinia carotovora subsp. atroseptica).